The primary structure comprises 208 residues: ER membrane protein complex subunit 8/9 homolog (208 aa).

The MPN domain occupies 11–146 (YEISQNAYIK…ERSPVMQLCV (136 aa)).

Belongs to the EMC8/EMC9 family.

The chain is ER membrane protein complex subunit 8/9 homolog (EMB2731) from Arabidopsis thaliana (Mouse-ear cress).